The following is a 194-amino-acid chain: Threonylcarbamoyl-AMP synthase (194 aa).

Residues 12–194 (SPNMKDLLIQ…DVMTGKLIRE (183 aa)) enclose the YrdC-like domain.

The protein belongs to the SUA5 family. TsaC subfamily.

The protein resides in the cytoplasm. It catalyses the reaction L-threonine + hydrogencarbonate + ATP = L-threonylcarbamoyladenylate + diphosphate + H2O. Required for the formation of a threonylcarbamoyl group on adenosine at position 37 (t(6)A37) in tRNAs that read codons beginning with adenine. Catalyzes the conversion of L-threonine, HCO(3)(-)/CO(2) and ATP to give threonylcarbamoyl-AMP (TC-AMP) as the acyladenylate intermediate, with the release of diphosphate. In Blochmanniella pennsylvanica (strain BPEN), this protein is Threonylcarbamoyl-AMP synthase.